Reading from the N-terminus, the 350-residue chain is Protein-glutamate methylesterase/protein-glutamine glutaminase 1 (350 aa).

In terms of domain architecture, Response regulatory spans 3–121 (KVLIVEDSPV…RDYDIRARDL (119 aa)). Aspartate 54 bears the 4-aspartylphosphate mark. The CheB-type methylesterase domain maps to 148–342 (PASGEPDIGK…PPEKIARVLV (195 aa)). Catalysis depends on residues serine 170, histidine 197, and aspartate 290.

This sequence belongs to the CheB family. Phosphorylated by CheA. Phosphorylation of the N-terminal regulatory domain activates the methylesterase activity.

It is found in the cytoplasm. The catalysed reaction is [protein]-L-glutamate 5-O-methyl ester + H2O = L-glutamyl-[protein] + methanol + H(+). It carries out the reaction L-glutaminyl-[protein] + H2O = L-glutamyl-[protein] + NH4(+). Its function is as follows. Involved in chemotaxis. Part of a chemotaxis signal transduction system that modulates chemotaxis in response to various stimuli. Catalyzes the demethylation of specific methylglutamate residues introduced into the chemoreceptors (methyl-accepting chemotaxis proteins or MCP) by CheR. Also mediates the irreversible deamidation of specific glutamine residues to glutamic acid. This Syntrophus aciditrophicus (strain SB) protein is Protein-glutamate methylesterase/protein-glutamine glutaminase 1.